The primary structure comprises 338 residues: Bacteriochlorophyllide d C-20 methyltransferase (338 aa).

Position 147 (E147) interacts with S-adenosyl-L-methionine. Substrate is bound at residue H150. S-adenosyl-L-methionine is bound by residues G177, N200, 227 to 228 (DI), and 242 to 243 (CR). Y246 functions as the Nucleophile in the catalytic mechanism. H290 is a binding site for a bacteriochlorophyll d.

Belongs to the class I-like SAM-binding methyltransferase superfamily. Cation-independent O-methyltransferase family. Homodimer.

It catalyses the reaction a bacteriochlorophyllide d + S-adenosyl-L-methionine = a bacteriochlorophyllide c + S-adenosyl-L-homocysteine + H(+). It functions in the pathway porphyrin-containing compound metabolism; bacteriochlorophyll biosynthesis (light-independent). Functionally, involved in the biosynthesis of the major light-harvesting pigment bacteriochlorophyll c (BChlc), which confers a significant competitive advantage to green sulfur bacteria living at limiting red and near-infrared light intensities. Catalyzes the methylation at the C-20 position of the cyclic tetrapyrrole chlorin of bacteriochlorophyll d (BChld) to produce bacteriochlorophyll c (BChlc) using S-adenosylmethionine (SAM) as a methyl source. The chain is Bacteriochlorophyllide d C-20 methyltransferase from Chlorobaculum tepidum (strain ATCC 49652 / DSM 12025 / NBRC 103806 / TLS) (Chlorobium tepidum).